The primary structure comprises 878 residues: Phosphoenolpyruvate carboxylase (878 aa).

Residues His-140 and Lys-545 contribute to the active site.

This sequence belongs to the PEPCase type 1 family. It depends on Mg(2+) as a cofactor.

It catalyses the reaction oxaloacetate + phosphate = phosphoenolpyruvate + hydrogencarbonate. Functionally, forms oxaloacetate, a four-carbon dicarboxylic acid source for the tricarboxylic acid cycle. This Pseudomonas syringae pv. tomato (strain ATCC BAA-871 / DC3000) protein is Phosphoenolpyruvate carboxylase.